The sequence spans 104 residues: MTDAKVFDELWQVICERAASESLEKSYVRHLLFHEKGIDKSLEKVGEEAVEFILAAKNGVSEKTVGEAADLIFHMMVALKAADVDFDLVEEELAVRRAGMHLHD.

The protein belongs to the PRA-PH family.

It is found in the cytoplasm. The enzyme catalyses 1-(5-phospho-beta-D-ribosyl)-ATP + H2O = 1-(5-phospho-beta-D-ribosyl)-5'-AMP + diphosphate + H(+). The protein operates within amino-acid biosynthesis; L-histidine biosynthesis; L-histidine from 5-phospho-alpha-D-ribose 1-diphosphate: step 2/9. The polypeptide is Phosphoribosyl-ATP pyrophosphatase (Methanocorpusculum labreanum (strain ATCC 43576 / DSM 4855 / Z)).